The primary structure comprises 370 residues: Gametogenetin-binding protein 1 (370 aa).

Disordered regions lie at residues valine 26–threonine 114 and proline 240–valine 263. Residues glycine 31 to glutamate 49 show a composition bias toward polar residues. Residues leucine 225 to aspartate 370 form a required for induction of mitochondrial fragmentation region. Basic and acidic residues predominate over residues glycine 250–glutamate 260. Residues lysine 298 to aspartate 370 are interaction with GGN.

In terms of assembly, interacts with CCDC159. Interacts with isoform 1 and isoform 2 of GGN. As to expression, testis-specific. In the testis, expressed only in germ cells and not in somatic cells. Expression starts in late primary spermatocytes in stage X-XII tubules and gradually increases towards step 1-3 spermatids in stage I-III tubules. Expression then declines continuously and disappears after step 7 spermatids in stage VII tubules (at protein level).

It localises to the cytoplasm. Its subcellular location is the membrane. The protein resides in the golgi apparatus. It is found in the mitochondrion intermembrane space. Functionally, induces mitochondrial fragmentation, possibly by promoting DNM1L-dependent fission and may play a role in mitochondrial morphogenesis during spermatogenesis. The chain is Gametogenetin-binding protein 1 (Ggnbp1) from Mus musculus (Mouse).